A 299-amino-acid chain; its full sequence is Peroxisomal biogenesis factor 19 (299 aa).

The disordered stretch occupies residues 1-63 (MAAAEGDGGV…SPGDTAKDAL (63 aa)). Position 2 is an N-acetylalanine (Ala-2). The tract at residues 2 to 56 (AAAEGDGGVRAEADRELEELLESALDDFDKAKPSPAPPPTTTAPDASGPQKRSPG) is docking to the peroxisome membrane and binding to PEX3. Residues 2-91 (AAAEGDGGVR…QATAEFEKAM (90 aa)) form a necessary for PEX19 function on peroxisome biogenesis region. The span at 16–27 (RELEELLESALD) shows a compositional bias: acidic residues. Ser-35, Ser-54, and Ser-66 each carry phosphoserine. Thr-236 carries the post-translational modification Phosphothreonine. Residue Cys-296 is modified to Cysteine methyl ester. Cys-296 is lipidated: S-farnesyl cysteine. Residues 297-299 (LIM) constitute a propeptide, removed in mature form.

The protein belongs to the peroxin-19 family. Interacts with a broad range of peroxisomal membrane proteins, including PEX3, PEX10, PEX11A, PEX11B, PEX12, PEX13, PEX14 and PEX16, PXMP2/PMP22, PXMP4/PMP24, SLC25A17/PMP34, ABCD1/ALDP, ABCD2/ALDRP, and ABCD3/PMP70. Also interacts with the tumor suppressor CDKN2A/p19ARF.

It is found in the cytoplasm. Its subcellular location is the peroxisome membrane. Its function is as follows. Necessary for early peroxisomal biogenesis. Acts both as a cytosolic chaperone and as an import receptor for peroxisomal membrane proteins (PMPs). Binds and stabilizes newly synthesized PMPs in the cytoplasm by interacting with their hydrophobic membrane-spanning domains, and targets them to the peroxisome membrane by binding to the integral membrane protein PEX3. Excludes CDKN2A from the nucleus and prevents its interaction with MDM2, which results in active degradation of TP53. The chain is Peroxisomal biogenesis factor 19 (PEX19) from Bos taurus (Bovine).